A 91-amino-acid chain; its full sequence is Non-specific lipid-transfer protein 1 (91 aa).

Intrachain disulfides connect cysteine 3-cysteine 50, cysteine 13-cysteine 27, cysteine 28-cysteine 73, and cysteine 48-cysteine 87.

The protein belongs to the plant LTP family.

Its function is as follows. Plant non-specific lipid-transfer proteins transfer phospholipids as well as galactolipids across membranes. May play a role in wax or cutin deposition in the cell walls of expanding epidermal cells and certain secretory tissues. In Prunus persica (Peach), this protein is Non-specific lipid-transfer protein 1.